The sequence spans 267 residues: MLKIGVVGCGAIASLITKALMSDRLNKAEVLAFYDGNLEKAEKLAMETGADFCRSLDELVSKDLDLIVECASVTAVEDTVIKSLNNGKDVIIMSVGALADKDLFLKLYKLAEKLGRKIYIPSGAIAGIDAVKSGSLGKISDVTLTTTKPVHGLKSALEEQGLNTDEIKEPKVVFEGTVFEAISKFPQNINVSVVLSLASRYPAKVKIIADPNAVVNRHEILVKGSIGTIKTCVENNPCRDNPKTSALAAYSVIRLIKDLSEPVRIGT.

Residues A124 and N190 each coordinate NAD(+). H218 is an active-site residue.

Belongs to the L-aspartate dehydrogenase family.

It catalyses the reaction L-aspartate + NADP(+) + H2O = oxaloacetate + NH4(+) + NADPH + H(+). It carries out the reaction L-aspartate + NAD(+) + H2O = oxaloacetate + NH4(+) + NADH + H(+). The protein operates within cofactor biosynthesis; NAD(+) biosynthesis; iminoaspartate from L-aspartate (dehydrogenase route): step 1/1. Its function is as follows. Specifically catalyzes the NAD or NADP-dependent dehydrogenation of L-aspartate to iminoaspartate. The protein is L-aspartate dehydrogenase of Methanococcus maripaludis (strain C6 / ATCC BAA-1332).